A 1316-amino-acid polypeptide reads, in one-letter code: DNA-directed RNA polymerase subunit beta' (1316 aa).

Residues cysteine 60, cysteine 62, cysteine 75, and cysteine 78 each contribute to the Zn(2+) site. The Mg(2+) site is built by aspartate 535, aspartate 537, and aspartate 539. Zn(2+) contacts are provided by cysteine 891, cysteine 968, cysteine 975, and cysteine 978.

The protein belongs to the RNA polymerase beta' chain family. As to quaternary structure, the RNAP catalytic core consists of 2 alpha, 1 beta, 1 beta' and 1 omega subunit. When a sigma factor is associated with the core the holoenzyme is formed, which can initiate transcription. It depends on Mg(2+) as a cofactor. Zn(2+) serves as cofactor.

The catalysed reaction is RNA(n) + a ribonucleoside 5'-triphosphate = RNA(n+1) + diphosphate. In terms of biological role, DNA-dependent RNA polymerase catalyzes the transcription of DNA into RNA using the four ribonucleoside triphosphates as substrates. This Mycobacterium tuberculosis (strain CDC 1551 / Oshkosh) protein is DNA-directed RNA polymerase subunit beta'.